The chain runs to 4646 residues: Cytoplasmic dynein 1 heavy chain 1 (4646 aa).

An N-acetylserine modification is found at S2. Residues 53 to 1867 are stem; it reads EAALEEKSAL…SIQMANAKFN (1815 aa). S70 carries the post-translational modification Phosphoserine. Coiled coils occupy residues 181-202, 455-478, and 543-566; these read SVEK…NIEI, AHRK…QLRA, and TEAW…RITA. Residues 448–703 form an interaction with DYNC1I2 region; the sequence is MVWRINPAHR…NTQEIFDDWA (256 aa). The interval 651–802 is interaction with DYNC1LI2; the sequence is AKQIDRQLTA…EKVEERNTIS (152 aa). At K1125 the chain carries N6-acetyllysine. 2 coiled-coil regions span residues 1171–1252 and 1357–1373; these read TYVQ…AVES and RKLR…LKSF. A Phosphoserine modification is found at S1230. AAA stretches follow at residues 1868–2099, 2180–2452, 2556–2805, and 2899–3168; these read YGFE…VLVS, EELK…LTRL, EVET…WVRG, and VFYE…GGRT. ATP-binding positions include 1906 to 1913 and 2224 to 2231; these read GPAGTGKT and GPSGSGKS. The segment at 2390 to 2411 is disordered; the sequence is GEDEAQRRRKGKEDEGEEAASP. ATP contacts are provided by residues 2595–2602 and 2937–2944; these read GPPGSGKT and GVSGAGKT. Coiled-coil stretches lie at residues 3189–3275, 3396–3500, and 3737–3800; these read EKRS…ADKQ, AIAQ…KNQM, and EFQL…VSQQ. Positions 3189–3500 are stalk; the sequence is EKRSELEEQQ…KTSETFKNQM (312 aa). K3480 is modified (N6-acetyllysine). AAA stretches follow at residues 3553–3782 and 4005–4221; these read LSNA…EVTR and AHMF…TVDT. S4162 carries the phosphoserine modification. N6-acetyllysine is present on K4283. Position 4366 is a phosphothreonine (T4366). The residue at position 4368 (S4368) is a Phosphoserine.

This sequence belongs to the dynein heavy chain family. In terms of assembly, homodimer. The cytoplasmic dynein 1 complex consists of two catalytic heavy chains (HCs) and a number of non-catalytic subunits presented by intermediate chains (ICs), light intermediate chains (LICs) and light chains (LCs); the composition seems to vary in respect to the IC, LIC and LC composition. The heavy chain homodimer serves as a scaffold for the probable homodimeric assembly of the respective non-catalytic subunits. The ICs and LICs bind directly to the HC dimer and dynein LCs assemble on the IC dimer. Interacts with DYNC1LI1; DYNC1LI1 and DYNC1LI2 bind mutually exclusive to DYNC1H1. Interacts with DYNC1LI2; DYNC1LI1 and DYNC1LI2 bind mutually exclusive to DYNC1H1. Interacts with DYNC1I2. Interacts with BICD2. Interacts with isoform 2 of CRACR2A. Interacts with DNALI1.

The protein resides in the cytoplasm. Its subcellular location is the cytoskeleton. In terms of biological role, cytoplasmic dynein 1 acts as a motor for the intracellular retrograde motility of vesicles and organelles along microtubules. Dynein has ATPase activity; the force-producing power stroke is thought to occur on release of ADP. Plays a role in mitotic spindle assembly and metaphase plate congression. The protein is Cytoplasmic dynein 1 heavy chain 1 of Homo sapiens (Human).